Here is a 344-residue protein sequence, read N- to C-terminus: Small ribosomal subunit protein bS1m (344 aa).

Ser327 is modified (phosphoserine).

It belongs to the bacterial ribosomal protein bS1 family. In terms of assembly, component of the mitochondrial small ribosomal subunit (mt-SSU). Mature yeast 74S mitochondrial ribosomes consist of a small (37S) and a large (54S) subunit. The 37S small subunit contains a 15S ribosomal RNA (15S mt-rRNA) and 34 different proteins. The 54S large subunit contains a 21S rRNA (21S mt-rRNA) and 46 different proteins.

It localises to the mitochondrion. In terms of biological role, component of the mitochondrial ribosome (mitoribosome), a dedicated translation machinery responsible for the synthesis of mitochondrial genome-encoded proteins, including at least some of the essential transmembrane subunits of the mitochondrial respiratory chain. The mitoribosomes are attached to the mitochondrial inner membrane and translation products are cotranslationally integrated into the membrane. bS1m functionally interacts with the 5'-UTR of mitochondrial mRNAs. This is Small ribosomal subunit protein bS1m (MRP51) from Saccharomyces cerevisiae (strain ATCC 204508 / S288c) (Baker's yeast).